Reading from the N-terminus, the 70-residue chain is Small, acid-soluble spore protein 1 (70 aa).

The protein belongs to the alpha/beta-type SASP family.

In terms of biological role, SASP are bound to spore DNA. They are double-stranded DNA-binding proteins that cause DNA to change to an a-like conformation. They protect the DNA backbone from chemical and enzymatic cleavage and are thus involved in dormant spore's high resistance to UV light. This is Small, acid-soluble spore protein 1 (sasP-1) from Geobacillus stearothermophilus (Bacillus stearothermophilus).